The primary structure comprises 376 residues: Erythronate-4-phosphate dehydrogenase (376 aa).

2 residues coordinate substrate: S45 and T67. Residues D147, 209–211, and D235 each bind NAD(+); that span reads ASR. Residue R211 is part of the active site. The active site involves E240. H257 acts as the Proton donor in catalysis. G260 contributes to the NAD(+) binding site. A substrate-binding site is contributed by Y261.

It belongs to the D-isomer specific 2-hydroxyacid dehydrogenase family. PdxB subfamily. As to quaternary structure, homodimer.

Its subcellular location is the cytoplasm. The catalysed reaction is 4-phospho-D-erythronate + NAD(+) = (R)-3-hydroxy-2-oxo-4-phosphooxybutanoate + NADH + H(+). The protein operates within cofactor biosynthesis; pyridoxine 5'-phosphate biosynthesis; pyridoxine 5'-phosphate from D-erythrose 4-phosphate: step 2/5. Catalyzes the oxidation of erythronate-4-phosphate to 3-hydroxy-2-oxo-4-phosphonooxybutanoate. The chain is Erythronate-4-phosphate dehydrogenase from Aeromonas hydrophila subsp. hydrophila (strain ATCC 7966 / DSM 30187 / BCRC 13018 / CCUG 14551 / JCM 1027 / KCTC 2358 / NCIMB 9240 / NCTC 8049).